A 40-amino-acid chain; its full sequence is Ferredoxin-2 (40 aa).

In terms of domain architecture, 2Fe-2S ferredoxin-type spans Tyr-3–Arg-40. Cys-39 is a [2Fe-2S] cluster binding site.

It belongs to the 2Fe2S plant-type ferredoxin family. It depends on [2Fe-2S] cluster as a cofactor.

The protein resides in the plastid. The protein localises to the chloroplast. Functionally, ferredoxins are iron-sulfur proteins that transfer electrons in a wide variety of metabolic reactions. The sequence is that of Ferredoxin-2 from Pisum sativum (Garden pea).